The primary structure comprises 291 residues: 3-methyl-2-oxobutanoate hydroxymethyltransferase (291 aa).

Polar residues predominate over residues 1–10 (MTQLSAAQTP). Residues 1–20 (MTQLSAAQTPQPKPADGNRA) form a disordered region. The Mg(2+) site is built by Asp-71 and Asp-110. 3-methyl-2-oxobutanoate contacts are provided by residues 71–72 (DS), Asp-110, and Lys-140. Glu-142 is a Mg(2+) binding site. The Proton acceptor role is filled by Glu-208.

The protein belongs to the PanB family. Homodecamer; pentamer of dimers. Mg(2+) serves as cofactor.

Its subcellular location is the cytoplasm. The enzyme catalyses 3-methyl-2-oxobutanoate + (6R)-5,10-methylene-5,6,7,8-tetrahydrofolate + H2O = 2-dehydropantoate + (6S)-5,6,7,8-tetrahydrofolate. It participates in cofactor biosynthesis; (R)-pantothenate biosynthesis; (R)-pantoate from 3-methyl-2-oxobutanoate: step 1/2. Catalyzes the reversible reaction in which hydroxymethyl group from 5,10-methylenetetrahydrofolate is transferred onto alpha-ketoisovalerate to form ketopantoate. This is 3-methyl-2-oxobutanoate hydroxymethyltransferase from Streptomyces coelicolor (strain ATCC BAA-471 / A3(2) / M145).